Reading from the N-terminus, the 212-residue chain is Outer surface protein C (212 aa).

The first 18 residues, 1-18, serve as a signal peptide directing secretion; the sequence is MKKNTLSAILMTLFLFIS. C19 carries N-palmitoyl cysteine lipidation. A lipid anchor (S-diacylglycerol cysteine) is attached at C19.

It belongs to the OspC lipoprotein family. Homodimer. Interacts with tick Ixodes ricinus salivary protein Iric-1. Binds human (host) plasminogen. The N-terminus is blocked.

The protein resides in the cell outer membrane. Its subcellular location is the cell surface. Its function is as follows. Major immunodominant protein in mammalian hosts. Required for initial stages of mammalian infection. Inhibits macrophage-mediated phagocytosis of the bacteria. Binds human plasminogen; this probably confers an extracellular protease activity on the bacteria that allows it to traverse tissue. Unlike closely related strain B31, its interaction with Ixodes ricinus salivary protein Iric-1 does not protect against antibody-mediated destruction in vitro. The protein is Outer surface protein C of Borreliella afzelii (strain PKo) (Borrelia afzelii).